The primary structure comprises 445 residues: Xylose isomerase (445 aa).

Residues His107 and Asp110 contribute to the active site. Residues Glu238, Glu274, His277, Asp302, Asp313, Asp315, and Asp345 each contribute to the Mg(2+) site.

Belongs to the xylose isomerase family. As to quaternary structure, homotetramer. Mg(2+) is required as a cofactor.

It localises to the cytoplasm. The catalysed reaction is alpha-D-xylose = alpha-D-xylulofuranose. This chain is Xylose isomerase, found in Bacillus cereus (strain ATCC 10987 / NRS 248).